The chain runs to 145 residues: Small ribosomal subunit protein uS17c (145 aa).

A chloroplast-targeting transit peptide spans 1–36 (MLLTTPFVSSPVRVQGNGGSGASPWAGAATALRIQA). The segment at 101–145 (KTKHFLAVPLPPRDTRRKSQLLPPLQSQSQSQDQDQPPTPPPSSD) is disordered. Over residues 120–136 (QLLPPLQSQSQSQDQDQ) the composition is skewed to low complexity.

Belongs to the universal ribosomal protein uS17 family. In terms of assembly, part of the 30S ribosomal subunit.

Its subcellular location is the plastid. It localises to the chloroplast. Its function is as follows. One of the primary rRNA binding proteins, it binds specifically to the 5'-end of 16S ribosomal RNA. The sequence is that of Small ribosomal subunit protein uS17c (RPS17) from Oryza sativa subsp. japonica (Rice).